Reading from the N-terminus, the 348-residue chain is MAFTYWDKEKRMTLKQMIQQVTINEQENELTHYVFTTPMSMPTFGKPMLGYVPLNEVATSKFFSNVNDFDRDNQLAMAHFQDTTITRAYNLTNSIKPGDTSLPDAEVAALKWFWKFFTSINLVRQPPMDNVLYWACQFLSSGTSFLPLEKDVEIVFSGFQGSHTCMFASLRQMNLSPILCPYYEHMTNFKTTAEIREYVDANEELKSLITYLCLCTIVGLCDTFVETRNMETGEYVWKVSNVVSDNHTPAQNIGKFCYTTQNAKYMIQLVHVLLFPLTDNKYADLPNYVAVITQGAINQSLPRNVVNNNEGSNSDTTTDTAPSTSGIVSGSADTVASLYPDEFKYVQS.

Residues 303-331 (RNVVNNNEGSNSDTTTDTAPSTSGIVSGS) form a disordered region. Over residues 312-325 (SNSDTTTDTAPSTS) the composition is skewed to low complexity.

This is an uncharacterized protein from Aedes pseudoscutellaris reovirus (isolate France) (ApRV).